The following is a 446-amino-acid chain: 3-phosphoshikimate 1-carboxyvinyltransferase (446 aa).

The tract at residues 1–20 (MSTWPAPSTATPVHATVTVP) is disordered. 3-phosphoshikimate-binding residues include Lys-23, Ser-24, and Arg-28. Position 23 (Lys-23) interacts with phosphoenolpyruvate. 2 residues coordinate phosphoenolpyruvate: Gly-100 and Arg-128. 3-phosphoshikimate-binding residues include Ser-171, Ser-172, Gln-173, Ser-200, Glu-315, and His-344. Gln-173 serves as a coordination point for phosphoenolpyruvate. The active-site Proton acceptor is the Glu-315. Phosphoenolpyruvate contacts are provided by Arg-348, Arg-389, and Lys-414.

This sequence belongs to the EPSP synthase family. Monomer.

The protein resides in the cytoplasm. The enzyme catalyses 3-phosphoshikimate + phosphoenolpyruvate = 5-O-(1-carboxyvinyl)-3-phosphoshikimate + phosphate. It functions in the pathway metabolic intermediate biosynthesis; chorismate biosynthesis; chorismate from D-erythrose 4-phosphate and phosphoenolpyruvate: step 6/7. Functionally, catalyzes the transfer of the enolpyruvyl moiety of phosphoenolpyruvate (PEP) to the 5-hydroxyl of shikimate-3-phosphate (S3P) to produce enolpyruvyl shikimate-3-phosphate and inorganic phosphate. The chain is 3-phosphoshikimate 1-carboxyvinyltransferase from Mycolicibacterium vanbaalenii (strain DSM 7251 / JCM 13017 / BCRC 16820 / KCTC 9966 / NRRL B-24157 / PYR-1) (Mycobacterium vanbaalenii).